The following is a 210-amino-acid chain: Ribosomal RNA small subunit methyltransferase G (210 aa).

S-adenosyl-L-methionine is bound by residues Gly-75, Phe-80, 98-100 (EST), 126-127 (AE), and Arg-141.

It belongs to the methyltransferase superfamily. RNA methyltransferase RsmG family.

It localises to the cytoplasm. Its function is as follows. Specifically methylates the N7 position of a guanine in 16S rRNA. This Solibacter usitatus (strain Ellin6076) protein is Ribosomal RNA small subunit methyltransferase G.